A 483-amino-acid chain; its full sequence is Wax ester synthase/diacylglycerol acyltransferase 10 (483 aa).

The Cytoplasmic portion of the chain corresponds to 1 to 203 (MTKEEVEEEP…SINAVYYAVR (203 aa)). His-143 (proton acceptor) is an active-site residue. A helical transmembrane segment spans residues 204–222 (LIWNTIVDLLLLWATSLFF). Residues 223-483 (KDTETPISEG…MKDTLSGKSD (261 aa)) are Lumenal-facing. Residues Asn-394 and Asn-399 are each glycosylated (N-linked (GlcNAc...) asparagine).

It in the N-terminal section; belongs to the long-chain O-acyltransferase family. As to expression, mostly expressed in roots.

The protein localises to the cell membrane. The protein resides in the endoplasmic reticulum membrane. It catalyses the reaction an acyl-CoA + a 1,2-diacyl-sn-glycerol = a triacyl-sn-glycerol + CoA. The enzyme catalyses a long chain fatty alcohol + a fatty acyl-CoA = a wax ester + CoA. It participates in glycerolipid metabolism; triacylglycerol biosynthesis. Its pathway is lipid metabolism. In terms of biological role, bifunctional wax ester synthase/diacylglycerol acyltransferase. Involved in cuticular wax biosynthesis. The polypeptide is Wax ester synthase/diacylglycerol acyltransferase 10 (Arabidopsis thaliana (Mouse-ear cress)).